The sequence spans 321 residues: Nodulation protein D 1 (321 aa).

The region spanning 6-63 (LDLNLLVALDALMTERKLTAAARSINLSQPAMSAAITRLRTYFRDELFTMNGRELVPT) is the HTH lysR-type domain. A DNA-binding region (H-T-H motif) is located at residues 23–42 (LTAAARSINLSQPAMSAAIT).

The protein belongs to the LysR transcriptional regulatory family.

Functionally, nodD regulates the expression of the nodABCFE genes which encode other nodulation proteins. NodD is also a negative regulator of its own expression. Binds flavonoids as inducers. The polypeptide is Nodulation protein D 1 (nodD1) (Bradyrhizobium japonicum).